The following is a 439-amino-acid chain: Enolase 2 (439 aa).

Substrate-binding residues include histidine 160 and glutamate 169. Glutamate 212 acts as the Proton donor in catalysis. The Mg(2+) site is built by aspartate 247, glutamate 296, and aspartate 323. Positions 296 and 323 each coordinate substrate. Lysine 348 acts as the Proton acceptor in catalysis. Substrate is bound by residues 375–378 and lysine 399; that span reads SHRS.

It belongs to the enolase family. In terms of assembly, homodimer. It depends on Mg(2+) as a cofactor.

It is found in the cytoplasm. The catalysed reaction is (2R)-2-phosphoglycerate = phosphoenolpyruvate + H2O. It functions in the pathway carbohydrate degradation; glycolysis; pyruvate from D-glyceraldehyde 3-phosphate: step 4/5. The protein is Enolase 2 (ENO2) of Debaryomyces hansenii (strain ATCC 36239 / CBS 767 / BCRC 21394 / JCM 1990 / NBRC 0083 / IGC 2968) (Yeast).